The chain runs to 112 residues: Large ribosomal subunit protein eL30 (112 aa).

The protein belongs to the eukaryotic ribosomal protein eL30 family.

This Euphorbia esula (Leafy spurge) protein is Large ribosomal subunit protein eL30 (RPL30).